The sequence spans 118 residues: Small ribosomal subunit protein uS13 (118 aa).

The interval 92 to 118 is disordered; the sequence is RRNLPVRGQNTKNNARTRKGPTRPLKR. Positions 106 to 118 are enriched in basic residues; sequence ARTRKGPTRPLKR.

This sequence belongs to the universal ribosomal protein uS13 family. As to quaternary structure, part of the 30S ribosomal subunit. Forms a loose heterodimer with protein S19. Forms two bridges to the 50S subunit in the 70S ribosome.

Functionally, located at the top of the head of the 30S subunit, it contacts several helices of the 16S rRNA. In the 70S ribosome it contacts the 23S rRNA (bridge B1a) and protein L5 of the 50S subunit (bridge B1b), connecting the 2 subunits; these bridges are implicated in subunit movement. Contacts the tRNAs in the A and P-sites. This Psychrobacter arcticus (strain DSM 17307 / VKM B-2377 / 273-4) protein is Small ribosomal subunit protein uS13.